A 163-amino-acid polypeptide reads, in one-letter code: Small t antigen (163 aa).

Methionine 1 bears the N-acetylmethionine; by host mark. A J domain is found at 12-76; that stretch reads LLMELLGLPM…KSLNTDDGFS (65 aa). The segment at 95–107 adopts a C4-type; atypical zinc-finger fold; that stretch reads CSFGSFSCKCLFC. The H1C3-type; atypical zinc finger occupies 113-132; the sequence is HKQELTKKPKVWGDCLCFKC.

Interacts with host PPP2R1A; the interaction inhibits PP2A activity.

It localises to the host cytoplasm. The protein localises to the host nucleus. In terms of biological role, promotes efficient viral genome replication by accelerating both G1 and S phase progression of the cell cycle. Inhibits host PP2A by binding to the A subunit, thereby displacing lower affinity regulatory B subunit. Inactivation of PP2A in turn results in the transactivation of cyclin A and cyclin D1 promoters. Late during the infection cycle, ST may induce dephosphorylation of host MTOR, leading to the inhibition of cap-dependent translation. May establish and maintain high levels of viral genomes during persistent infection in cell culture. The polypeptide is Small t antigen (Saimiri boliviensis boliviensis (Bolivian squirrel monkey)).